A 149-amino-acid chain; its full sequence is Calmodulin (149 aa).

Position 2 is an N-acetylalanine (A2). EF-hand domains are found at residues 8 to 43, 44 to 79, 81 to 116, and 117 to 149; these read EQIA…LGQN, PTEA…KMKD, DSEE…LGEK, and LTDE…MTSK. Ca(2+)-binding residues include D21, D23, D25, T27, E32, D57, D59, D61, T63, E68, D94, D96, N98, and E105. K116 is modified (N6,N6,N6-trimethyllysine). Residues D130, D132, D134, Q136, and E141 each coordinate Ca(2+).

This sequence belongs to the calmodulin family.

Calmodulin mediates the control of a large number of enzymes, ion channels and other proteins by Ca(2+). Among the enzymes to be stimulated by the calmodulin-Ca(2+) complex are a number of protein kinases and phosphatases. This is Calmodulin from Pyuridae sp. (Sea squirt).